We begin with the raw amino-acid sequence, 423 residues long: RNA polymerase sigma factor SigA (423 aa).

The tract at residues 1-76 is disordered; that stretch reads MKKSKRKNAQ…EEDLPIPKIS (76 aa). A compositionally biased stretch (acidic residues) spans 21–70; it reads VQEEAEELPEFPEGEPDPDLEDPDLALEDDLLDLPEEGEGLDLEEEEEDL. Positions 78–113 are sigma-70 factor domain-1; the sequence is SDPVRQYLHEIGQVPLLTLEEEVELARKVEEGMEAI. The interval 187-257 is sigma-70 factor domain-2; it reads LIEANLRLVV…NRAIADQART (71 aa). The short motif at 211-214 is the Interaction with polymerase core subunit RpoC element; the sequence is DLIQ. The sigma-70 factor domain-3 stretch occupies residues 266–344; sequence ETINKLSRTA…DEHLPSPVDA (79 aa). The segment at 357–409 is sigma-70 factor domain-4; the sequence is ALSKLSEREAMVLKLRKGLIDGREHTLEEVGAFFGVTRERIRQIENKALRKLK. Positions 383–402 form a DNA-binding region, H-T-H motif; the sequence is LEEVGAFFGVTRERIRQIEN.

This sequence belongs to the sigma-70 factor family. RpoD/SigA subfamily. Interacts transiently with the RNA polymerase catalytic core formed by RpoA, RpoB, RpoC and RpoZ (2 alpha, 1 beta, 1 beta' and 1 omega subunit) to form the RNA polymerase holoenzyme that can initiate transcription.

Its subcellular location is the cytoplasm. In terms of biological role, sigma factors are initiation factors that promote the attachment of RNA polymerase to specific initiation sites and are then released. This sigma factor is the primary sigma factor during exponential growth. The protein is RNA polymerase sigma factor SigA of Thermus thermophilus (strain ATCC BAA-163 / DSM 7039 / HB27).